The chain runs to 388 residues: Protein-glutamate methylesterase/protein-glutamine glutaminase 1 (388 aa).

The Response regulatory domain maps to Gln4–Leu121. The residue at position 55 (Asp55) is a 4-aspartylphosphate. The disordered stretch occupies residues Ser149–Ser190. A compositionally biased stretch (low complexity) spans Gly153–Ser169. Over residues Leu174–Ala189 the composition is skewed to polar residues. The 201-residue stretch at Pro188 to Gly388 folds into the CheB-type methylesterase domain. Residues Ser207, His234, and Asp330 contribute to the active site.

The protein belongs to the CheB family. Phosphorylated by CheA. Phosphorylation of the N-terminal regulatory domain activates the methylesterase activity.

The protein resides in the cytoplasm. The enzyme catalyses [protein]-L-glutamate 5-O-methyl ester + H2O = L-glutamyl-[protein] + methanol + H(+). It catalyses the reaction L-glutaminyl-[protein] + H2O = L-glutamyl-[protein] + NH4(+). Functionally, involved in chemotaxis. Part of a chemotaxis signal transduction system that modulates chemotaxis in response to various stimuli. Catalyzes the demethylation of specific methylglutamate residues introduced into the chemoreceptors (methyl-accepting chemotaxis proteins or MCP) by CheR. Also mediates the irreversible deamidation of specific glutamine residues to glutamic acid. This chain is Protein-glutamate methylesterase/protein-glutamine glutaminase 1, found in Shewanella denitrificans (strain OS217 / ATCC BAA-1090 / DSM 15013).